Consider the following 257-residue polypeptide: tRNA pseudouridine synthase A (257 aa).

D53 functions as the Nucleophile in the catalytic mechanism. Residue Y111 coordinates substrate.

The protein belongs to the tRNA pseudouridine synthase TruA family. As to quaternary structure, homodimer.

The enzyme catalyses uridine(38/39/40) in tRNA = pseudouridine(38/39/40) in tRNA. Functionally, formation of pseudouridine at positions 38, 39 and 40 in the anticodon stem and loop of transfer RNAs. This chain is tRNA pseudouridine synthase A, found in Xanthomonas campestris pv. campestris (strain 8004).